An 80-amino-acid chain; its full sequence is Acyl carrier protein (80 aa).

Residues 4 to 79 (NSIEEKVRSI…DVVAYIEKVQ (76 aa)) form the Carrier domain. Position 39 is an O-(pantetheine 4'-phosphoryl)serine (Ser-39).

This sequence belongs to the acyl carrier protein (ACP) family. In terms of processing, 4'-phosphopantetheine is transferred from CoA to a specific serine of apo-ACP by AcpS. This modification is essential for activity because fatty acids are bound in thioester linkage to the sulfhydryl of the prosthetic group.

The protein resides in the cytoplasm. It functions in the pathway lipid metabolism; fatty acid biosynthesis. Carrier of the growing fatty acid chain in fatty acid biosynthesis. In Akkermansia muciniphila (strain ATCC BAA-835 / DSM 22959 / JCM 33894 / BCRC 81048 / CCUG 64013 / CIP 107961 / Muc), this protein is Acyl carrier protein.